The chain runs to 134 residues: Peroxisomal testis-specific protein 1 (134 aa).

The Microbody targeting signal motif lies at 131–134 (NHLL).

The protein resides in the peroxisome. This chain is Peroxisomal testis-specific protein 1 (PXT1), found in Homo sapiens (Human).